Reading from the N-terminus, the 201-residue chain is Musculin (201 aa).

Disordered stretches follow at residues 1 to 108 and 182 to 201; these read MSTG…NAAN and RPDS…GTSA. Residues 46 to 56 are compositionally biased toward acidic residues; that stretch reads SAEEEDGEEEP. The Nuclear localization signal motif lies at 66 to 71; it reads KRKRLR. Gly residues predominate over residues 74–86; it reads DAGGAGGRAGGAG. In terms of domain architecture, bHLH spans 102–154; the sequence is SQRNAANARERARMRVLSKAFSRLKTSLPWVPPDTKLSKLDTLRLASSYIAHL.

Efficient DNA binding requires dimerization with another bHLH protein. Binds DNA as a homodimer or a heterodimer. Forms a heterodimer with TCF3.

It is found in the nucleus. Its function is as follows. Transcription repressor that blocks myogenesis and activation of E-box dependent muscle genes. This Mus musculus (Mouse) protein is Musculin (Msc).